Reading from the N-terminus, the 397-residue chain is 2-oxoglutarate and iron-dependent oxygenase domain-containing protein ICU11 (397 aa).

The interval 1 to 56 (MCNQTPLRSMALDSSGKQPEQQQQQQPRASSGNGEARLKLRRTPNEEHEPENYEDL) is disordered. Residues 18–27 (QPEQQQQQQP) show a composition bias toward low complexity. Residues 238–339 (SLDSHHGYIV…RANLILWCRS (102 aa)) form the Fe2OG dioxygenase domain. Residues histidine 260, aspartate 262, and histidine 320 each contribute to the Fe cation site. 2-oxoglutarate is bound at residue arginine 330.

The cofactor is Fe(2+). It depends on L-ascorbate as a cofactor. Expressed in roots, cotyledons, rosette leaves, cauline leaves and inflorescences.

Its subcellular location is the nucleus. The protein resides in the nucleoplasm. Its function is as follows. Participates in the epigenetic repression of flowering genes in association with CP2. Functions in the repression of several members of the MADS-box transcription factors family, including SEP3, during vegetative development via histone modification. The polypeptide is 2-oxoglutarate and iron-dependent oxygenase domain-containing protein ICU11 (Arabidopsis thaliana (Mouse-ear cress)).